The chain runs to 66 residues: Large ribosomal subunit protein bL33c (66 aa).

It belongs to the bacterial ribosomal protein bL33 family.

It localises to the plastid. The protein localises to the chloroplast. The chain is Large ribosomal subunit protein bL33c from Welwitschia mirabilis (Tree tumbo).